The chain runs to 397 residues: Mycinamicin IV hydroxylase/epoxidase (397 aa).

The disordered stretch occupies residues 63–86 (RGPSMTRDEPRTRPEMVKGGLLSM). Residues 68 to 78 (TRDEPRTRPEM) show a composition bias toward basic and acidic residues. Glycine 81 lines the substrate pocket. Heme contacts are provided by histidine 91, arginine 95, arginine 288, histidine 344, and cysteine 346.

The protein belongs to the cytochrome P450 family. The cofactor is heme.

It functions in the pathway antibiotic biosynthesis; mycinamicin biosynthesis. Its function is as follows. Involved in the biosynthesis of mycinamicin, a 16-membered macrolide antibiotic. Catalyzes consecutive hydroxylation (at C14) and epoxidation (at C12-C13) reactions with mycinamicin IV as initial substrate, leading to mycinamicin II. These reactions require prior dimethylation of 6-deoxyallose to mycinose for effective conversion by the dual function MycG enzyme. The sequence is that of Mycinamicin IV hydroxylase/epoxidase from Micromonospora griseorubida.